The chain runs to 86 residues: Small ribosomal subunit protein uS17 (86 aa).

It belongs to the universal ribosomal protein uS17 family. As to quaternary structure, part of the 30S ribosomal subunit.

Functionally, one of the primary rRNA binding proteins, it binds specifically to the 5'-end of 16S ribosomal RNA. This chain is Small ribosomal subunit protein uS17, found in Desulfotalea psychrophila (strain LSv54 / DSM 12343).